Here is a 404-residue protein sequence, read N- to C-terminus: Sodium/glutamate symporter (404 aa).

Helical transmembrane passes span Phe5 to Val25, Thr33 to Trp53, Thr69 to Ile89, Leu95 to Ala115, Ile161 to Ala181, Ser219 to Val239, Ala245 to Leu265, Ala277 to Leu297, Ile307 to Ile327, Ala338 to Ala358, and Ala373 to Leu393.

It belongs to the glutamate:Na(+) symporter (ESS) (TC 2.A.27) family.

Its subcellular location is the cell inner membrane. Its function is as follows. Catalyzes the sodium-dependent transport of glutamate. The protein is Sodium/glutamate symporter of Haemophilus influenzae (strain ATCC 51907 / DSM 11121 / KW20 / Rd).